A 200-amino-acid polypeptide reads, in one-letter code: Potassium-transporting ATPase KdpC subunit (200 aa).

The helical transmembrane segment at 6 to 26 (PALVLLILLTLITGIAYPLLT) threads the bilayer.

The protein belongs to the KdpC family. As to quaternary structure, the system is composed of three essential subunits: KdpA, KdpB and KdpC.

It is found in the cell inner membrane. Part of the high-affinity ATP-driven potassium transport (or Kdp) system, which catalyzes the hydrolysis of ATP coupled with the electrogenic transport of potassium into the cytoplasm. This subunit acts as a catalytic chaperone that increases the ATP-binding affinity of the ATP-hydrolyzing subunit KdpB by the formation of a transient KdpB/KdpC/ATP ternary complex. The protein is Potassium-transporting ATPase KdpC subunit of Yersinia pseudotuberculosis serotype O:1b (strain IP 31758).